The following is a 494-amino-acid chain: Integrin beta-like protein 1 (494 aa).

Residues methionine 1–alanine 23 form the signal peptide. 40 disulfides stabilise this stretch: cysteine 40/cysteine 71, cysteine 51/cysteine 69, cysteine 63/cysteine 74, cysteine 76/cysteine 89, cysteine 91/cysteine 112, cysteine 96/cysteine 110, cysteine 104/cysteine 115, cysteine 117/cysteine 126, cysteine 132/cysteine 159, cysteine 143/cysteine 157, cysteine 151/cysteine 162, cysteine 164/cysteine 178, cysteine 180/cysteine 202, cysteine 185/cysteine 200, cysteine 194/cysteine 205, cysteine 207/cysteine 216, cysteine 220/cysteine 247, cysteine 231/cysteine 245, cysteine 239/cysteine 250, cysteine 252/cysteine 269, cysteine 271/cysteine 296, cysteine 276/cysteine 294, cysteine 288/cysteine 299, cysteine 301/cysteine 310, cysteine 316/cysteine 343, cysteine 327/cysteine 341, cysteine 335/cysteine 346, cysteine 348/cysteine 361, cysteine 363/cysteine 384, cysteine 368/cysteine 382, cysteine 376/cysteine 387, cysteine 389/cysteine 398, cysteine 404/cysteine 431, cysteine 415/cysteine 429, cysteine 423/cysteine 434, cysteine 436/cysteine 448, cysteine 450/cysteine 471, cysteine 455/cysteine 469, cysteine 463/cysteine 474, and cysteine 476/cysteine 485. 10 I-EGF domains span residues cysteine 40–glutamate 90, cysteine 91–glutamine 127, cysteine 132–glutamate 179, cysteine 180–glutamate 217, cysteine 220–glutamate 270, cysteine 271–glutamate 311, cysteine 316–glutamate 362, cysteine 363–glutamine 399, cysteine 404–aspartate 449, and cysteine 450–glutamate 486. One copy of the I repeat lies at cysteine 51–valine 95. The segment at cysteine 51 to proline 494 is cysteine-rich tandem repeats. An II repeat occupies cysteine 96–methionine 142. An III repeat occupies cysteine 143–glutamate 184. One copy of the IV repeat lies at cysteine 185 to arginine 230. The stretch at cysteine 231 to aspartate 275 is one V repeat. The stretch at cysteine 276–lysine 326 is one VI repeat. One copy of the VII repeat lies at cysteine 327–arginine 367. The VIII repeat unit spans residues cysteine 368–leucine 414. Asparagine 405 carries an N-linked (GlcNAc...) asparagine glycan. The IX repeat unit spans residues cysteine 415–aspartate 454. Residues cysteine 455 to proline 494 form a X repeat.

Its subcellular location is the secreted. The sequence is that of Integrin beta-like protein 1 (Itgbl1) from Rattus norvegicus (Rat).